The chain runs to 332 residues: Beta-ketoacyl-[acyl-carrier-protein] synthase III (332 aa).

Residues Cys116 and His257 contribute to the active site. Residues 258-262 (QANQR) form an ACP-binding region. Residue Asn287 is part of the active site.

The protein belongs to the thiolase-like superfamily. FabH family. Homodimer.

Its subcellular location is the cytoplasm. The catalysed reaction is malonyl-[ACP] + acetyl-CoA + H(+) = 3-oxobutanoyl-[ACP] + CO2 + CoA. It functions in the pathway lipid metabolism; fatty acid biosynthesis. Catalyzes the condensation reaction of fatty acid synthesis by the addition to an acyl acceptor of two carbons from malonyl-ACP. Catalyzes the first condensation reaction which initiates fatty acid synthesis and may therefore play a role in governing the total rate of fatty acid production. Possesses both acetoacetyl-ACP synthase and acetyl transacylase activities. Its substrate specificity determines the biosynthesis of branched-chain and/or straight-chain of fatty acids. The sequence is that of Beta-ketoacyl-[acyl-carrier-protein] synthase III from Acaryochloris marina (strain MBIC 11017).